A 414-amino-acid chain; its full sequence is tRNA N6-adenosine threonylcarbamoyltransferase, mitochondrial (414 aa).

The N-terminal 29 residues, 1–29 (MLMLRRTAGAIPKPPKSKVYGFLRRFSVH), are a transit peptide targeting the mitochondrion. Lys74 and Lys140 each carry N6-acetyllysine. A divalent metal cation is bound by residues His147 and His151. Substrate is bound by residues 169–173 (LISGG) and Asp202. Lys203 is modified (N6-acetyllysine). 2 residues coordinate substrate: Gly222 and Glu226. N6-acetyllysine is present on residues Lys230 and Lys299. Substrate is bound by residues 329–330 (SN) and Thr357. Asp358 contacts a divalent metal cation.

The protein belongs to the KAE1 / TsaD family. In terms of assembly, monomer. Requires a divalent metal cation as cofactor.

Its subcellular location is the mitochondrion. The enzyme catalyses L-threonylcarbamoyladenylate + adenosine(37) in tRNA = N(6)-L-threonylcarbamoyladenosine(37) in tRNA + AMP + H(+). Required for the formation of a threonylcarbamoyl group on adenosine at position 37 (t(6)A37) in mitochondrial tRNAs that read codons beginning with adenine. Probably involved in the transfer of the threonylcarbamoyl moiety of threonylcarbamoyl-AMP (TC-AMP) to the N6 group of A37. Involved in mitochondrial genome maintenance. This chain is tRNA N6-adenosine threonylcarbamoyltransferase, mitochondrial, found in Mus musculus (Mouse).